Consider the following 378-residue polypeptide: UPF0754 membrane protein BC_0879 (378 aa).

Residues 357-377 (YLGALLGGMIGLVQGLLLLFL) traverse the membrane as a helical segment.

The protein belongs to the UPF0754 family.

Its subcellular location is the cell membrane. In Bacillus cereus (strain ATCC 14579 / DSM 31 / CCUG 7414 / JCM 2152 / NBRC 15305 / NCIMB 9373 / NCTC 2599 / NRRL B-3711), this protein is UPF0754 membrane protein BC_0879.